We begin with the raw amino-acid sequence, 229 residues long: 7-cyano-7-deazaguanine synthase (229 aa).

An ATP-binding site is contributed by 9-19; the sequence is LSGGLDSATVL. Zn(2+)-binding residues include cysteine 188, cysteine 198, cysteine 201, and cysteine 204.

It belongs to the QueC family. It depends on Zn(2+) as a cofactor.

It carries out the reaction 7-carboxy-7-deazaguanine + NH4(+) + ATP = 7-cyano-7-deazaguanine + ADP + phosphate + H2O + H(+). Its pathway is purine metabolism; 7-cyano-7-deazaguanine biosynthesis. Catalyzes the ATP-dependent conversion of 7-carboxy-7-deazaguanine (CDG) to 7-cyano-7-deazaguanine (preQ(0)). The polypeptide is 7-cyano-7-deazaguanine synthase (Methylobacillus flagellatus (strain ATCC 51484 / DSM 6875 / VKM B-1610 / KT)).